The sequence spans 271 residues: Tryptophan synthase alpha chain (271 aa).

Residues E49 and D60 each act as proton acceptor in the active site.

This sequence belongs to the TrpA family. In terms of assembly, tetramer of two alpha and two beta chains.

The enzyme catalyses (1S,2R)-1-C-(indol-3-yl)glycerol 3-phosphate + L-serine = D-glyceraldehyde 3-phosphate + L-tryptophan + H2O. It functions in the pathway amino-acid biosynthesis; L-tryptophan biosynthesis; L-tryptophan from chorismate: step 5/5. Its function is as follows. The alpha subunit is responsible for the aldol cleavage of indoleglycerol phosphate to indole and glyceraldehyde 3-phosphate. In Burkholderia ambifaria (strain MC40-6), this protein is Tryptophan synthase alpha chain.